The chain runs to 431 residues: Serine--tRNA ligase (431 aa).

Thr-236–Glu-238 lines the L-serine pocket. Arg-267 to Glu-269 contributes to the ATP binding site. An L-serine-binding site is contributed by Glu-290. Glu-354–Ser-357 contributes to the ATP binding site. Ser-389 serves as a coordination point for L-serine.

It belongs to the class-II aminoacyl-tRNA synthetase family. Type-1 seryl-tRNA synthetase subfamily. As to quaternary structure, homodimer. The tRNA molecule binds across the dimer.

The protein localises to the cytoplasm. It carries out the reaction tRNA(Ser) + L-serine + ATP = L-seryl-tRNA(Ser) + AMP + diphosphate + H(+). The catalysed reaction is tRNA(Sec) + L-serine + ATP = L-seryl-tRNA(Sec) + AMP + diphosphate + H(+). Its pathway is aminoacyl-tRNA biosynthesis; selenocysteinyl-tRNA(Sec) biosynthesis; L-seryl-tRNA(Sec) from L-serine and tRNA(Sec): step 1/1. Its function is as follows. Catalyzes the attachment of serine to tRNA(Ser). Is also able to aminoacylate tRNA(Sec) with serine, to form the misacylated tRNA L-seryl-tRNA(Sec), which will be further converted into selenocysteinyl-tRNA(Sec). This is Serine--tRNA ligase from Janthinobacterium sp. (strain Marseille) (Minibacterium massiliensis).